A 635-amino-acid chain; its full sequence is 1-deoxy-D-xylulose-5-phosphate synthase (635 aa).

Residues His73 and 114-116 (SHA) contribute to the thiamine diphosphate site. Asp146 provides a ligand contact to Mg(2+). Residues 147-148 (GA), Asn176, Tyr287, and Glu368 each bind thiamine diphosphate. Asn176 contacts Mg(2+).

The protein belongs to the transketolase family. DXPS subfamily. As to quaternary structure, homodimer. The cofactor is Mg(2+). Requires thiamine diphosphate as cofactor.

It carries out the reaction D-glyceraldehyde 3-phosphate + pyruvate + H(+) = 1-deoxy-D-xylulose 5-phosphate + CO2. It participates in metabolic intermediate biosynthesis; 1-deoxy-D-xylulose 5-phosphate biosynthesis; 1-deoxy-D-xylulose 5-phosphate from D-glyceraldehyde 3-phosphate and pyruvate: step 1/1. Its function is as follows. Catalyzes the acyloin condensation reaction between C atoms 2 and 3 of pyruvate and glyceraldehyde 3-phosphate to yield 1-deoxy-D-xylulose-5-phosphate (DXP). In Corynebacterium diphtheriae (strain ATCC 700971 / NCTC 13129 / Biotype gravis), this protein is 1-deoxy-D-xylulose-5-phosphate synthase.